Here is a 507-residue protein sequence, read N- to C-terminus: ATP synthase subunit alpha (507 aa).

168-175 is an ATP binding site; sequence GDRQTGKT.

This sequence belongs to the ATPase alpha/beta chains family. As to quaternary structure, F-type ATPases have 2 components, CF(1) - the catalytic core - and CF(0) - the membrane proton channel. CF(1) has five subunits: alpha(3), beta(3), gamma(1), delta(1), epsilon(1). CF(0) has three main subunits: a(1), b(2) and c(9-12). The alpha and beta chains form an alternating ring which encloses part of the gamma chain. CF(1) is attached to CF(0) by a central stalk formed by the gamma and epsilon chains, while a peripheral stalk is formed by the delta and b chains.

The protein localises to the cell membrane. The enzyme catalyses ATP + H2O + 4 H(+)(in) = ADP + phosphate + 5 H(+)(out). Functionally, produces ATP from ADP in the presence of a proton gradient across the membrane. The alpha chain is a regulatory subunit. This chain is ATP synthase subunit alpha, found in Mesomycoplasma hyopneumoniae (strain J / ATCC 25934 / NCTC 10110) (Mycoplasma hyopneumoniae).